The primary structure comprises 375 residues: Chaperone protein DnaJ (375 aa).

The J domain maps to 5–69 (DYYEILGVSK…QKRAAYDQYG (65 aa)). A CR-type zinc finger spans residues 130–208 (GVTKEIRIPT…CHGHGRVEKA (79 aa)). The Zn(2+) site is built by cysteine 143, cysteine 146, cysteine 160, cysteine 163, cysteine 182, cysteine 185, cysteine 196, and cysteine 199. CXXCXGXG motif repeat units follow at residues 143–150 (CGVCHGSG), 160–167 (CPTCHGQG), 182–189 (CPHCHGRG), and 196–203 (CNSCHGHG).

The protein belongs to the DnaJ family. In terms of assembly, homodimer. Zn(2+) serves as cofactor.

The protein resides in the cytoplasm. Its function is as follows. Participates actively in the response to hyperosmotic and heat shock by preventing the aggregation of stress-denatured proteins and by disaggregating proteins, also in an autonomous, DnaK-independent fashion. Unfolded proteins bind initially to DnaJ; upon interaction with the DnaJ-bound protein, DnaK hydrolyzes its bound ATP, resulting in the formation of a stable complex. GrpE releases ADP from DnaK; ATP binding to DnaK triggers the release of the substrate protein, thus completing the reaction cycle. Several rounds of ATP-dependent interactions between DnaJ, DnaK and GrpE are required for fully efficient folding. Also involved, together with DnaK and GrpE, in the DNA replication of plasmids through activation of initiation proteins. In Serratia proteamaculans (strain 568), this protein is Chaperone protein DnaJ.